A 66-amino-acid polypeptide reads, in one-letter code: Large ribosomal subunit protein bL31 (66 aa).

C16, C18, C36, and C39 together coordinate Zn(2+).

The protein belongs to the bacterial ribosomal protein bL31 family. Type A subfamily. In terms of assembly, part of the 50S ribosomal subunit. It depends on Zn(2+) as a cofactor.

Functionally, binds the 23S rRNA. The sequence is that of Large ribosomal subunit protein bL31 from Bacillus licheniformis (strain ATCC 14580 / DSM 13 / JCM 2505 / CCUG 7422 / NBRC 12200 / NCIMB 9375 / NCTC 10341 / NRRL NRS-1264 / Gibson 46).